Reading from the N-terminus, the 337-residue chain is Ribosomal RNA small subunit methyltransferase H (337 aa).

Residues 36-38 (GGH), Asp56, Phe82, Asp100, and Gln107 each bind S-adenosyl-L-methionine. Positions 315–337 (LEERSKRIPNPQSPIPASQGDAQ) are disordered.

The protein belongs to the methyltransferase superfamily. RsmH family.

It is found in the cytoplasm. It catalyses the reaction cytidine(1402) in 16S rRNA + S-adenosyl-L-methionine = N(4)-methylcytidine(1402) in 16S rRNA + S-adenosyl-L-homocysteine + H(+). Specifically methylates the N4 position of cytidine in position 1402 (C1402) of 16S rRNA. This is Ribosomal RNA small subunit methyltransferase H from Xanthomonas euvesicatoria pv. vesicatoria (strain 85-10) (Xanthomonas campestris pv. vesicatoria).